The primary structure comprises 201 residues: Urease accessory protein UreG (201 aa).

GTP is bound at residue 11-18 (GPVGSGKT).

This sequence belongs to the SIMIBI class G3E GTPase family. UreG subfamily. In terms of assembly, homodimer. UreD, UreF and UreG form a complex that acts as a GTP-hydrolysis-dependent molecular chaperone, activating the urease apoprotein by helping to assemble the nickel containing metallocenter of UreC. The UreE protein probably delivers the nickel.

The protein resides in the cytoplasm. Its function is as follows. Facilitates the functional incorporation of the urease nickel metallocenter. This process requires GTP hydrolysis, probably effectuated by UreG. The protein is Urease accessory protein UreG of Synechococcus sp. (strain CC9605).